Here is a 216-residue protein sequence, read N- to C-terminus: Octanoyltransferase (216 aa).

Residues 33-212 (AHTPDELWLV…ILSNILGLTA (180 aa)) enclose the BPL/LPL catalytic domain. Substrate contacts are provided by residues 72–79 (RGGQVTYH), 139–141 (SLG), and 152–154 (GVA). The active-site Acyl-thioester intermediate is C170.

The protein belongs to the LipB family.

The protein localises to the cytoplasm. It carries out the reaction octanoyl-[ACP] + L-lysyl-[protein] = N(6)-octanoyl-L-lysyl-[protein] + holo-[ACP] + H(+). Its pathway is protein modification; protein lipoylation via endogenous pathway; protein N(6)-(lipoyl)lysine from octanoyl-[acyl-carrier-protein]: step 1/2. Catalyzes the transfer of endogenously produced octanoic acid from octanoyl-acyl-carrier-protein onto the lipoyl domains of lipoate-dependent enzymes. Lipoyl-ACP can also act as a substrate although octanoyl-ACP is likely to be the physiological substrate. This is Octanoyltransferase from Saccharophagus degradans (strain 2-40 / ATCC 43961 / DSM 17024).